The chain runs to 424 residues: MLSAEQNDKLARVGPGTPMGELLRRYWHPIGGESEFETKATRPVRLMGEDLVLYKDLSGNYGLMDRHCPHRRADMACGMVEADGLRCSYHGWMFDAQGACTEQPFEDTANPKGRYKDKVRIKAYPVRALGGLLWAYMGPLPAPELPDWEPFSWKNGFRQIVISVLPCNWLQGQENSMDPIHFEWMHANWSKRLRGETGPYGPKHLKIDFREYDYGFTYNRIREDTDETNPLWTIGRACLWPNAMFTGDHFEYRVPIDDETMMSVGWFFTRVPRDAEPYVQESIPVWHGPIKDAQGEWITSHVMNQDFVAWIGQGTISDRTQENLGLSDKGIGMMRRQFLRDMEKISRGEDPKAIIRDPAINKAIPLPTIHRDAVMEGMTAEEIEAGGALHLKRFIFQYGQPEHVLKMQQDAMRISQDNKGYVDA.

Residues 27 to 135 (WHPIGGESEF…VRALGGLLWA (109 aa)) form the Rieske domain. Positions 68, 70, 87, and 90 each coordinate [2Fe-2S] cluster. Fe cation-binding residues include His181, His186, and Asp306.

The protein belongs to the bacterial ring-hydroxylating dioxygenase alpha subunit family. Homotrimer. The three-component monooxygenase is composed of an oxygenase (LigXa), a ferredoxin (LigXc) and a ferredoxin reductase (LigXd). It depends on [2Fe-2S] cluster as a cofactor. Fe cation serves as cofactor.

It catalyses the reaction 5,5'-dehydrodivanillate + NADH + O2 + H(+) = 2,2',3-trihydroxy-3'-methoxy-5,5'-dicarboxybiphenyl + formaldehyde + NAD(+) + H2O. Its function is as follows. Involved in the catabolism of 5,5'-dehydrodivanillate (DDVA), an intermediate in the biodegradation of lignin. Part of a three-component monooxygenase that catalyzes the O-demethylation of DDVA, leading to the formation of 2,2',3-trihydroxy-3'-methoxy-5,5'-dicarboxybiphenyl (OH-DDVA). This Sphingobium sp. (strain NBRC 103272 / SYK-6) protein is 5,5'-dehydrodivanillate O-demethylase oxygenase subunit.